Reading from the N-terminus, the 1843-residue chain is Proteasome activator complex subunit 4 (1843 aa).

Residues methionine 1–glutamate 11 are compositionally biased toward low complexity. A disordered region spans residues methionine 1–glycine 25. A compositionally biased stretch (pro residues) spans proline 12–glycine 22. 2 HEAT repeats span residues proline 475–cysteine 519 and asparagine 998–glycine 1037. At serine 1121 the chain carries Phosphoserine. HEAT repeat units follow at residues arginine 1179–arginine 1217 and aspartate 1354–histidine 1392. The residue at position 1614 (serine 1614) is a Phosphoserine. HEAT repeat units follow at residues proline 1636–phenylalanine 1674 and glutamate 1680–leucine 1718. The segment at alanine 1650–lysine 1738 is bromodomain-like (BRDL). Serine 1746 bears the Phosphoserine mark.

Belongs to the BLM10 family. As to quaternary structure, homodimer. Interacts with the 20S and 26S proteasomes. Component of the spermatoproteasome, a form of the proteasome specifically found in testis.

The protein resides in the cytoplasm. It localises to the cytosol. The protein localises to the nucleus. It is found in the nucleus speckle. In terms of biological role, associated component of the proteasome that specifically recognizes acetylated histones and promotes ATP- and ubiquitin-independent degradation of core histones during spermatogenesis and DNA damage response. Recognizes and binds acetylated histones via its bromodomain-like (BRDL) region and activates the proteasome by opening the gated channel for substrate entry. Binds to the core proteasome via its C-terminus, which occupies the same binding sites as the proteasomal ATPases, opening the closed structure of the proteasome via an active gating mechanism. Component of the spermatoproteasome, a form of the proteasome specifically found in testis: binds to acetylated histones and promotes degradation of histones, thereby participating actively to the exchange of histones during spermatogenesis. Also involved in DNA damage response in somatic cells, by promoting degradation of histones following DNA double-strand breaks. In Homo sapiens (Human), this protein is Proteasome activator complex subunit 4.